The chain runs to 352 residues: Glucose 1-dehydrogenase 1 (352 aa).

Cysteine 35 contacts Zn(2+). Threonine 37 contributes to the substrate binding site. Zn(2+)-binding residues include histidine 60 and glutamate 61. Position 83 (asparagine 83) interacts with substrate. Zn(2+) contacts are provided by cysteine 87, cysteine 90, cysteine 93, and cysteine 101. 3 residues coordinate substrate: glutamate 108, glutamine 144, and aspartate 148. Glutamine 144 provides a ligand contact to Zn(2+). NADP(+) is bound by residues 182-185 (TGTI), 204-206 (NKR), 264-266 (FGF), 292-294 (LIN), and lysine 341. Asparagine 294 is a binding site for substrate.

This sequence belongs to the zinc-containing alcohol dehydrogenase family. Glucose 1-dehydrogenase subfamily. The cofactor is Zn(2+).

It catalyses the reaction D-glucose + NAD(+) = D-glucono-1,5-lactone + NADH + H(+). The catalysed reaction is D-glucose + NADP(+) = D-glucono-1,5-lactone + NADPH + H(+). Functionally, catalyzes the NAD(P)(+)-dependent oxidation of D-glucose to D-gluconate via gluconolactone. Can utilize both NAD(+) and NADP(+) as electron acceptor. Is involved in the degradation of glucose through a non-phosphorylative variant of the Entner-Doudoroff pathway. The sequence is that of Glucose 1-dehydrogenase 1 from Picrophilus torridus (strain ATCC 700027 / DSM 9790 / JCM 10055 / NBRC 100828 / KAW 2/3).